The primary structure comprises 680 residues: Harmonin-binding protein USHBP1 (680 aa).

Basic residues predominate over residues 1-15 (MSARATRPRSRRGRH). 3 disordered regions span residues 1–101 (MSAR…GPAE), 135–162 (PVEA…GQQE), and 217–250 (ASPP…DSPM). Basic and acidic residues predominate over residues 76 to 86 (PEERREPEVEA). 3 coiled-coil regions span residues 177–219 (LGTR…EASP), 362–386 (ATNG…VAMD), and 479–506 (LADL…LRAQ). Positions 524–562 (LMGDGSSGGSSEDPSSEEEAGEDRQQHYQGPPALLGGQM) are disordered. Positions 573–661 (QELSASLTRA…QQAEELAVLT (89 aa)) form a coiled coil.

It belongs to the MCC family. As to quaternary structure, interacts via its C-terminus with the first PDZ domain of USH1C.

The sequence is that of Harmonin-binding protein USHBP1 from Rattus norvegicus (Rat).